A 544-amino-acid chain; its full sequence is CTP synthase (544 aa).

Residues 1 to 266 form an amidoligase domain region; the sequence is MATNYIFVTG…DDFVCDRFRL (266 aa). S14 contributes to the CTP binding site. Residue S14 coordinates UTP. ATP contacts are provided by residues 15–20 and D72; that span reads SLGKGI. D72 and E140 together coordinate Mg(2+). CTP contacts are provided by residues 147 to 149, 187 to 192, and K223; these read DIE and KTKPTQ. Residues 187–192 and K223 each bind UTP; that span reads KTKPTQ. 239–241 serves as a coordination point for ATP; the sequence is KDV. Residues 291-542 form the Glutamine amidotransferase type-1 domain; sequence TIGMVGKYVE…VKAAKEHQGK (252 aa). G352 provides a ligand contact to L-glutamine. The active-site Nucleophile; for glutamine hydrolysis is C379. L-glutamine is bound by residues 380–383, E403, and R470; that span reads LGMQ. Residues H515 and E517 contribute to the active site.

It belongs to the CTP synthase family. Homotetramer.

The enzyme catalyses UTP + L-glutamine + ATP + H2O = CTP + L-glutamate + ADP + phosphate + 2 H(+). It catalyses the reaction L-glutamine + H2O = L-glutamate + NH4(+). It carries out the reaction UTP + NH4(+) + ATP = CTP + ADP + phosphate + 2 H(+). The protein operates within pyrimidine metabolism; CTP biosynthesis via de novo pathway; CTP from UDP: step 2/2. Its activity is regulated as follows. Allosterically activated by GTP, when glutamine is the substrate; GTP has no effect on the reaction when ammonia is the substrate. The allosteric effector GTP functions by stabilizing the protein conformation that binds the tetrahedral intermediate(s) formed during glutamine hydrolysis. Inhibited by the product CTP, via allosteric rather than competitive inhibition. Functionally, catalyzes the ATP-dependent amination of UTP to CTP with either L-glutamine or ammonia as the source of nitrogen. Regulates intracellular CTP levels through interactions with the four ribonucleotide triphosphates. The chain is CTP synthase from Glaesserella parasuis serovar 5 (strain SH0165) (Haemophilus parasuis).